The chain runs to 111 residues: Urease subunit beta (111 aa).

The protein belongs to the urease beta subunit family. As to quaternary structure, heterotrimer of UreA (gamma), UreB (beta) and UreC (alpha) subunits. Three heterotrimers associate to form the active enzyme.

The protein localises to the cytoplasm. The catalysed reaction is urea + 2 H2O + H(+) = hydrogencarbonate + 2 NH4(+). It functions in the pathway nitrogen metabolism; urea degradation; CO(2) and NH(3) from urea (urease route): step 1/1. The chain is Urease subunit beta from Geobacillus kaustophilus (strain HTA426).